Here is a 320-residue protein sequence, read N- to C-terminus: o-succinylbenzoate synthase (320 aa).

The active-site Proton donor is Lys-133. Mg(2+)-binding residues include Asp-161, Glu-190, and Asp-213. Lys-235 acts as the Proton acceptor in catalysis.

The protein belongs to the mandelate racemase/muconate lactonizing enzyme family. MenC type 1 subfamily. The cofactor is a divalent metal cation.

The enzyme catalyses (1R,6R)-6-hydroxy-2-succinyl-cyclohexa-2,4-diene-1-carboxylate = 2-succinylbenzoate + H2O. Its pathway is quinol/quinone metabolism; 1,4-dihydroxy-2-naphthoate biosynthesis; 1,4-dihydroxy-2-naphthoate from chorismate: step 4/7. It functions in the pathway quinol/quinone metabolism; menaquinone biosynthesis. Its function is as follows. Converts 2-succinyl-6-hydroxy-2,4-cyclohexadiene-1-carboxylate (SHCHC) to 2-succinylbenzoate (OSB). The chain is o-succinylbenzoate synthase from Escherichia coli O127:H6 (strain E2348/69 / EPEC).